The sequence spans 210 residues: Large ribosomal subunit protein uL4 (210 aa).

The disordered stretch occupies residues 57 to 78 (VSGGGAKPWKQKGTGRARAGSN).

It belongs to the universal ribosomal protein uL4 family. As to quaternary structure, part of the 50S ribosomal subunit.

In terms of biological role, one of the primary rRNA binding proteins, this protein initially binds near the 5'-end of the 23S rRNA. It is important during the early stages of 50S assembly. It makes multiple contacts with different domains of the 23S rRNA in the assembled 50S subunit and ribosome. Functionally, forms part of the polypeptide exit tunnel. The chain is Large ribosomal subunit protein uL4 from Desulfovibrio desulfuricans (strain ATCC 27774 / DSM 6949 / MB).